The following is a 507-amino-acid chain: Maturase K (507 aa).

Belongs to the intron maturase 2 family. MatK subfamily.

The protein localises to the plastid. It is found in the chloroplast. Its function is as follows. Usually encoded in the trnK tRNA gene intron. Probably assists in splicing its own and other chloroplast group II introns. This Lyonia ligustrina (Maleberry) protein is Maturase K.